The following is a 1230-amino-acid chain: DNA-directed RNA polymerase, mitochondrial (1230 aa).

The N-terminal 41 residues, 1 to 41, are a transit peptide targeting the mitochondrion; the sequence is MSALCWGRGAAGLKRALRPCGRPGLPGKEGTAGGVCGPRRS. 3 disordered regions span residues 18–55, 95–115, and 731–750; these read RPCG…DRRK, GSGD…KDAT, and VPAP…PHSA. Pro residues predominate over residues 732–744; the sequence is PAPPSEAPQPPEA. Residues 802–1230 form a mediates interaction with TEFM region; the sequence is FRGRTYPCPP…QVKRSTYFFS (429 aa). Active-site residues include D922, K991, and D1151.

It belongs to the phage and mitochondrial RNA polymerase family. As to quaternary structure, homodimer. Component of the mitochondrial transcription initiation complex, composed at least of TFB2M, TFAM and POLRMT. In this complex TFAM recruits POLRMT to the promoter whereas TFB2M induces structural changes in POLRMT to enable promoter opening and trapping of the DNA non-template strand. Upon metabolic stress, forms a complex composed of FOXO3, SIRT3 and mitochondrial RNA polymerase POLRMT; the complex is recruited to mtDNA in a SIRT3-dependent manner. Also forms a complex composed of FOXO3, SIRT3, TFAM and POLRMT. Interacts with TFB1M and TFB2M, leading to the stimulation of transcription. Interacts with TEFM. Interacts with MTRES1.

It is found in the mitochondrion. The catalysed reaction is RNA(n) + a ribonucleoside 5'-triphosphate = RNA(n+1) + diphosphate. In terms of biological role, DNA-dependent RNA polymerase catalyzes the transcription of mitochondrial DNA into RNA using the four ribonucleoside triphosphates as substrates. Component of the mitochondrial transcription initiation complex, composed at least of TFB2M, TFAM and POLRMT that is required for basal transcription of mitochondrial DNA. In this complex, TFAM recruits POLRMT to a specific promoter whereas TFB2M induces structural changes in POLRMT to enable promoter opening and trapping of the DNA non-template strand. Has DNA primase activity. Catalyzes the synthesis of short RNA primers that are necessary for the initiation of lagging-strand DNA synthesis from the origin of light-strand DNA replication (OriL). This is DNA-directed RNA polymerase, mitochondrial from Homo sapiens (Human).